The following is a 303-amino-acid chain: MATKAAFARMNGLGNQIIVADMRGRADSITSAAAIRLASDSETAFDQIMAIHDPRTPGTDYYIAIINCDGTQAQACGNGTRCVVQALAAETGRHAFTFETRAGILTATEHDDGLISVDMGTPRFDWQDIPLAQAVADTRKIELQVGPADAPVLHSPSIASMGNPHAVFWVDKDVWSYELDKFGPLLENHPIFPERANISIAHVTSSDTIDLRTWERGAGLTRACGSAACAAAVSAARTGRTGRKVTVNVPGGPLLIEWRDDDHVMMTGPAEWEFSGTFDPATGEWSRDTQGLQGSGNADRGTA.

Asparagine 15, glutamine 47, and asparagine 67 together coordinate substrate. The Proton donor role is filled by cysteine 76. Substrate contacts are provided by residues 77–78, asparagine 163, asparagine 197, and 215–216; these read GN and ER. The active-site Proton acceptor is the cysteine 224. 225–226 is a binding site for substrate; the sequence is GS. The interval 279–303 is disordered; that stretch reads DPATGEWSRDTQGLQGSGNADRGTA.

This sequence belongs to the diaminopimelate epimerase family. As to quaternary structure, homodimer.

It is found in the cytoplasm. The catalysed reaction is (2S,6S)-2,6-diaminopimelate = meso-2,6-diaminopimelate. It functions in the pathway amino-acid biosynthesis; L-lysine biosynthesis via DAP pathway; DL-2,6-diaminopimelate from LL-2,6-diaminopimelate: step 1/1. In terms of biological role, catalyzes the stereoinversion of LL-2,6-diaminopimelate (L,L-DAP) to meso-diaminopimelate (meso-DAP), a precursor of L-lysine and an essential component of the bacterial peptidoglycan. The sequence is that of Diaminopimelate epimerase from Brucella canis (strain ATCC 23365 / NCTC 10854 / RM-666).